The following is a 218-amino-acid chain: Small ribosomal subunit protein uS3 (218 aa).

The KH type-2 domain maps to 38 to 106 (IREFISKRLS…RVHINILEIK (69 aa)).

Belongs to the universal ribosomal protein uS3 family. In terms of assembly, part of the 30S ribosomal subunit. Forms a tight complex with proteins S10 and S14.

Functionally, binds the lower part of the 30S subunit head. Binds mRNA in the 70S ribosome, positioning it for translation. The polypeptide is Small ribosomal subunit protein uS3 (Bacillus velezensis (strain DSM 23117 / BGSC 10A6 / LMG 26770 / FZB42) (Bacillus amyloliquefaciens subsp. plantarum)).